We begin with the raw amino-acid sequence, 417 residues long: Putative nickel insertion protein (417 aa).

The segment at 69–99 (HEHHHDHGHHHHGHGHHHDHTHDHHHHHEHR) is disordered. Positions 74 to 99 (DHGHHHHGHGHHHDHTHDHHHHHEHR) are enriched in basic residues.

The protein belongs to the LarC family.

This is Putative nickel insertion protein from Maridesulfovibrio salexigens (strain ATCC 14822 / DSM 2638 / NCIMB 8403 / VKM B-1763) (Desulfovibrio salexigens).